The following is a 300-amino-acid chain: Transcription initiation factor IIB (300 aa).

Residues 2 to 34 form a TFIIB-type zinc finger; the sequence is TKQKVCPVCGSTEFIYDPERGEIVCARCGYVIE. Zn(2+) contacts are provided by cysteine 7, cysteine 10, cysteine 26, and cysteine 29. Repeat copies occupy residues 114 to 197 and 210 to 291.

This sequence belongs to the TFIIB family.

Stabilizes TBP binding to an archaeal box-A promoter. Also responsible for recruiting RNA polymerase II to the pre-initiation complex (DNA-TBP-TFIIB). This Pyrococcus horikoshii (strain ATCC 700860 / DSM 12428 / JCM 9974 / NBRC 100139 / OT-3) protein is Transcription initiation factor IIB.